The chain runs to 512 residues: Ferrochelatase-2, chloroplastic (512 aa).

A disordered region spans residues 1–32; sequence MNCPAMTASPSSSSSSSYSTFRPPPPLLPQLS. A chloroplast-targeting transit peptide spans 1–83; the sequence is MNCPAMTASP…SNPLNISSSS (83 aa). Residues 9–21 show a composition bias toward low complexity; that stretch reads SPSSSSSSSYSTF. Valine 84 carries the post-translational modification N-acetylvaline.

The protein belongs to the ferrochelatase family. As to expression, expressed in leaves and flowers.

Its subcellular location is the plastid. It is found in the chloroplast membrane. The protein localises to the chloroplast thylakoid membrane. It catalyses the reaction heme b + 2 H(+) = protoporphyrin IX + Fe(2+). It functions in the pathway porphyrin-containing compound metabolism; protoheme biosynthesis; protoheme from protoporphyrin-IX: step 1/1. Its function is as follows. Catalyzes the last step of heme biosynthesis by inserting ferrous iron into protoporphyrin IX to produce protoheme. Produces heme for photosynthetic cytochromes, and for proteins involved in abiotic and biotic stress responses. May play a role in the quality control of individual chloroplasts during photo-oxidative stress through regulation of heme biosynthesis. This Arabidopsis thaliana (Mouse-ear cress) protein is Ferrochelatase-2, chloroplastic.